The sequence spans 128 residues: MSSNIPAELKYVASHEWLRLEEDGIITVGITHHAQELLGDIVFVELPEVGANLAAEEQAGVVESVKAASDVYAPIAGEVVAVNEDLPSAPETANSDPYGAGWFFKLKPANVADYDVLLTAEQYAGEVD.

Residues 25–107 (IITVGITHHA…YGAGWFFKLK (83 aa)) enclose the Lipoyl-binding domain. Lys66 is modified (N6-lipoyllysine).

It belongs to the GcvH family. The glycine cleavage system is composed of four proteins: P, T, L and H. The cofactor is (R)-lipoate.

Functionally, the glycine cleavage system catalyzes the degradation of glycine. The H protein shuttles the methylamine group of glycine from the P protein to the T protein. In Neisseria meningitidis serogroup A / serotype 4A (strain DSM 15465 / Z2491), this protein is Glycine cleavage system H protein.